The primary structure comprises 749 residues: Chitin synthase G (749 aa).

Transmembrane regions (helical) follow at residues 40 to 60, 73 to 93, 421 to 441, 451 to 471, and 483 to 503; these read CVGE…PLPP, VLQW…WLFC, FMQN…ISII, PVGF…YFGI, and LMFI…IFTA. The interval 683–749 is disordered; the sequence is IESGSGIPSG…RRYMQPEQMV (67 aa). Residues 697 to 718 show a composition bias toward polar residues; the sequence is LSSSVPQSGMQQSRAVPGNMSQ. Asn715 is a glycosylation site (N-linked (GlcNAc...) asparagine). Residues 728–742 are compositionally biased toward basic residues; it reads YTKRPSRIPRQKRRY.

The protein belongs to the chitin synthase family. Class VI subfamily.

It localises to the cell membrane. The enzyme catalyses [(1-&gt;4)-N-acetyl-beta-D-glucosaminyl](n) + UDP-N-acetyl-alpha-D-glucosamine = [(1-&gt;4)-N-acetyl-beta-D-glucosaminyl](n+1) + UDP + H(+). Polymerizes chitin, a structural polymer of the cell wall and septum, by transferring the sugar moiety of UDP-GlcNAc to the non-reducing end of the growing chitin polymer. Plays an important role in septal growth or maintenance. Mediates colony spore formation. In Aspergillus niger (strain ATCC MYA-4892 / CBS 513.88 / FGSC A1513), this protein is Chitin synthase G.